The chain runs to 26 residues: Delta-hemolysin (26 aa).

N-formylmethionine is present on Met1.

Belongs to the delta-lysin family.

It localises to the secreted. It is found in the host cell membrane. Functionally, lyses erythrocytes and many other mammalian cells. This is Delta-hemolysin (hld) from Staphylococcus aureus (strain MSSA476).